Here is a 635-residue protein sequence, read N- to C-terminus: Chaperone protein DnaK (635 aa).

At Thr-200 the chain carries Phosphothreonine; by autocatalysis. The interval 595–635 is disordered; the sequence is KAQPLTEKVQAKSSAENTSKEKSKADDDVVDADFEEVKDDK. The span at 612 to 621 shows a compositional bias: basic and acidic residues; the sequence is TSKEKSKADD. The span at 622 to 635 shows a compositional bias: acidic residues; it reads DVVDADFEEVKDDK.

It belongs to the heat shock protein 70 family.

Its function is as follows. Acts as a chaperone. In Ruthia magnifica subsp. Calyptogena magnifica, this protein is Chaperone protein DnaK.